Reading from the N-terminus, the 114-residue chain is Putative membrane protein insertion efficiency factor (114 aa).

The protein belongs to the UPF0161 family.

Its subcellular location is the cell inner membrane. Its function is as follows. Could be involved in insertion of integral membrane proteins into the membrane. This chain is Putative membrane protein insertion efficiency factor, found in Wolinella succinogenes (strain ATCC 29543 / DSM 1740 / CCUG 13145 / JCM 31913 / LMG 7466 / NCTC 11488 / FDC 602W) (Vibrio succinogenes).